A 271-amino-acid chain; its full sequence is 3-methyl-2-oxobutanoate hydroxymethyltransferase (271 aa).

The Mg(2+) site is built by Asp-51 and Asp-90. Residues 51 to 52 (DS), Asp-90, and Lys-118 each bind 3-methyl-2-oxobutanoate. Residue Glu-120 participates in Mg(2+) binding. Catalysis depends on Glu-186, which acts as the Proton acceptor.

It belongs to the PanB family. In terms of assembly, homodecamer; pentamer of dimers. Mg(2+) is required as a cofactor.

Its subcellular location is the cytoplasm. It catalyses the reaction 3-methyl-2-oxobutanoate + (6R)-5,10-methylene-5,6,7,8-tetrahydrofolate + H2O = 2-dehydropantoate + (6S)-5,6,7,8-tetrahydrofolate. It functions in the pathway cofactor biosynthesis; (R)-pantothenate biosynthesis; (R)-pantoate from 3-methyl-2-oxobutanoate: step 1/2. In terms of biological role, catalyzes the reversible reaction in which hydroxymethyl group from 5,10-methylenetetrahydrofolate is transferred onto alpha-ketoisovalerate to form ketopantoate. This chain is 3-methyl-2-oxobutanoate hydroxymethyltransferase, found in Xanthomonas oryzae pv. oryzae (strain PXO99A).